The chain runs to 469 residues: UDP-N-acetylmuramate--L-alanine ligase (469 aa).

113–119 (GSHGKTT) serves as a coordination point for ATP.

This sequence belongs to the MurCDEF family.

The protein resides in the cytoplasm. It carries out the reaction UDP-N-acetyl-alpha-D-muramate + L-alanine + ATP = UDP-N-acetyl-alpha-D-muramoyl-L-alanine + ADP + phosphate + H(+). Its pathway is cell wall biogenesis; peptidoglycan biosynthesis. Functionally, cell wall formation. This chain is UDP-N-acetylmuramate--L-alanine ligase, found in Sorangium cellulosum (strain So ce56) (Polyangium cellulosum (strain So ce56)).